Consider the following 369-residue polypeptide: Molybdenum import ATP-binding protein ModC (369 aa).

The ABC transporter domain occupies 7-243; the sequence is PGQAGIHARF…LDLPMAMTDD (237 aa). An ATP-binding site is contributed by 41 to 48; that stretch reads GQSGSGKT. Residues 304 to 369 form the Mop domain; that stretch reads EGSILNVLAV…AQIKAVSLLA (66 aa).

Belongs to the ABC transporter superfamily. Molybdate importer (TC 3.A.1.8) family. As to quaternary structure, the complex is composed of two ATP-binding proteins (ModC), two transmembrane proteins (ModB) and a solute-binding protein (ModA).

Its subcellular location is the cell inner membrane. The catalysed reaction is molybdate(out) + ATP + H2O = molybdate(in) + ADP + phosphate + H(+). Functionally, part of the ABC transporter complex ModABC involved in molybdenum import. Responsible for energy coupling to the transport system. The polypeptide is Molybdenum import ATP-binding protein ModC (Bordetella pertussis (strain Tohama I / ATCC BAA-589 / NCTC 13251)).